The sequence spans 809 residues: Sucrose synthase 3 (809 aa).

Residues 277-755 (MVFNVVILSP…GLQRIYERYT (479 aa)) are GT-B glycosyltransferase.

It belongs to the glycosyltransferase 1 family. Plant sucrose synthase subfamily. In terms of tissue distribution, detected in the whole plant with highest expression in developing siliques, vasculature of cotyledons and stomatal guard cells. Also detected throughout the mature parts of the root but not in the expanding zone.

The catalysed reaction is an NDP-alpha-D-glucose + D-fructose = a ribonucleoside 5'-diphosphate + sucrose + H(+). Sucrose-cleaving enzyme that provides UDP-glucose and fructose for various metabolic pathways. Modulates metabolic homeostasis and direct carbon towards starch synthesis in developing seeds. This Arabidopsis thaliana (Mouse-ear cress) protein is Sucrose synthase 3 (SUS3).